The chain runs to 605 residues: Proline--tRNA ligase (605 aa).

The protein belongs to the class-II aminoacyl-tRNA synthetase family. ProS type 1 subfamily. Homodimer.

Its subcellular location is the cytoplasm. The enzyme catalyses tRNA(Pro) + L-proline + ATP = L-prolyl-tRNA(Pro) + AMP + diphosphate. Functionally, catalyzes the attachment of proline to tRNA(Pro) in a two-step reaction: proline is first activated by ATP to form Pro-AMP and then transferred to the acceptor end of tRNA(Pro). As ProRS can inadvertently accommodate and process non-cognate amino acids such as alanine and cysteine, to avoid such errors it has two additional distinct editing activities against alanine. One activity is designated as 'pretransfer' editing and involves the tRNA(Pro)-independent hydrolysis of activated Ala-AMP. The other activity is designated 'posttransfer' editing and involves deacylation of mischarged Ala-tRNA(Pro). The misacylated Cys-tRNA(Pro) is not edited by ProRS. The protein is Proline--tRNA ligase of Bifidobacterium adolescentis (strain ATCC 15703 / DSM 20083 / NCTC 11814 / E194a).